Here is a 427-residue protein sequence, read N- to C-terminus: Glutamate-1-semialdehyde 2,1-aminomutase (427 aa).

Lys-265 bears the N6-(pyridoxal phosphate)lysine mark.

Belongs to the class-III pyridoxal-phosphate-dependent aminotransferase family. HemL subfamily. Homodimer. The cofactor is pyridoxal 5'-phosphate.

Its subcellular location is the cytoplasm. The catalysed reaction is (S)-4-amino-5-oxopentanoate = 5-aminolevulinate. Its pathway is porphyrin-containing compound metabolism; protoporphyrin-IX biosynthesis; 5-aminolevulinate from L-glutamyl-tRNA(Glu): step 2/2. This chain is Glutamate-1-semialdehyde 2,1-aminomutase, found in Mannheimia succiniciproducens (strain KCTC 0769BP / MBEL55E).